A 490-amino-acid chain; its full sequence is Serine hydroxymethyltransferase, mitochondrial (490 aa).

A mitochondrion-targeting transit peptide spans 1–20 (MFPRASALAKCMATVHRRGL). Lys-265 carries the N6-(pyridoxal phosphate)lysine modification.

Belongs to the SHMT family. Homotetramer. Interacts with NAP1. Requires pyridoxal 5'-phosphate as cofactor.

The protein resides in the mitochondrion. It catalyses the reaction (6R)-5,10-methylene-5,6,7,8-tetrahydrofolate + glycine + H2O = (6S)-5,6,7,8-tetrahydrofolate + L-serine. It participates in one-carbon metabolism; tetrahydrofolate interconversion. Functionally, interconversion of serine and glycine. The sequence is that of Serine hydroxymethyltransferase, mitochondrial (SHM1) from Saccharomyces cerevisiae (strain ATCC 204508 / S288c) (Baker's yeast).